The primary structure comprises 694 residues: Scarecrow-like protein 33 (694 aa).

Residues 289–313 are disordered; that stretch reads PAKASTFSKSPKGEKPEASGNSYTK. Positions 309 to 692 constitute a GRAS domain; it reads NSYTKETPDL…RIVYGSSIWV (384 aa). Residues 316–376 form a leucine repeat I (LRI) region; sequence PDLRTMLVSC…EARLAGIGTQ (61 aa). A VHIID region spans residues 395–462; sequence YQTYISVCPF…GSSCKLRITG (68 aa). The VHIID signature appears at 428–432; that stretch reads IHIID. Positions 478–510 are leucine repeat II (LRII); the sequence is ETGRRLAKYCQKFNIPFEYNAIAQKWESIKLED. Positions 519-613 are PFYRE; the sequence is VAVNSLFRFR…KEFYGREIMN (95 aa). The tract at residues 616–692 is SAW; the sequence is ACEGTERVER…RIVYGSSIWV (77 aa).

Belongs to the GRAS family. As to quaternary structure, interacts with SNRNP35.

Its subcellular location is the nucleus. Its function is as follows. Probable transcription factor involved in plant development. The polypeptide is Scarecrow-like protein 33 (SCL33) (Arabidopsis thaliana (Mouse-ear cress)).